A 572-amino-acid polypeptide reads, in one-letter code: Potassium-transporting ATPase potassium-binding subunit (572 aa).

11 consecutive transmembrane segments (helical) span residues 5–25 (LAAGLQIGFVILALAIAYVPL), 71–91 (VGYTLSLLGFSFASVIFLYVL), 97–117 (VLPLSGGLGAVSPAVAFNTAV), 142–162 (GLAVQNFVSAAVGLTVAVALI), 188–208 (ILLPLSFAVALILLSQGTIQS), 258–278 (PTPLSNVIEILAILIIPVCLT), 292–312 (LTVLSVMGTLFGGMLALVTWA), 387–407 (GLYGILVLAIIAVFVGGLLVG), 422–442 (ITMAALSVLVMPALVLVGTGI), 500–520 (LGMAMLLGRFLPIIFTLALAG), and 548–568 (GTVLLVAALTFFPALALGPIA).

It belongs to the KdpA family. In terms of assembly, the system is composed of three essential subunits: KdpA, KdpB and KdpC.

It localises to the cell membrane. Part of the high-affinity ATP-driven potassium transport (or Kdp) system, which catalyzes the hydrolysis of ATP coupled with the electrogenic transport of potassium into the cytoplasm. This subunit binds the extracellular potassium ions and delivers the ions to the membrane domain of KdpB through an intramembrane tunnel. The chain is Potassium-transporting ATPase potassium-binding subunit from Mycobacteroides abscessus (strain ATCC 19977 / DSM 44196 / CCUG 20993 / CIP 104536 / JCM 13569 / NCTC 13031 / TMC 1543 / L948) (Mycobacterium abscessus).